A 257-amino-acid polypeptide reads, in one-letter code: Transcription factor MYB3 (257 aa).

2 HTH myb-type domains span residues 9 to 61 and 62 to 116; these read KAHM…MNYL and RPDL…KRKL. DNA-binding regions (H-T-H motif) lie at residues 37–61 and 89–112; these read WRSLPRAAGLQRCGKSCRLRWMNYL and WSLIAGRLPGRTDNEIKNYWNTHI. Positions 189–193 match the Required for interaction with CPL1 motif; the sequence is LNLEL.

As to quaternary structure, interacts with CPL1. In terms of tissue distribution, expressed in roots, stems, leaves, flowers and siliques.

It is found in the nucleus. The chain is Transcription factor MYB3 (MYB3) from Arabidopsis thaliana (Mouse-ear cress).